We begin with the raw amino-acid sequence, 214 residues long: Holliday junction branch migration complex subunit RuvA (214 aa).

Residues methionine 1–proline 63 are domain I. Positions glycine 64 to arginine 139 are domain II. The segment at arginine 139–serine 143 is flexible linker. Residues alanine 144–arginine 214 are domain III.

Belongs to the RuvA family. In terms of assembly, homotetramer. Forms an RuvA(8)-RuvB(12)-Holliday junction (HJ) complex. HJ DNA is sandwiched between 2 RuvA tetramers; dsDNA enters through RuvA and exits via RuvB. An RuvB hexamer assembles on each DNA strand where it exits the tetramer. Each RuvB hexamer is contacted by two RuvA subunits (via domain III) on 2 adjacent RuvB subunits; this complex drives branch migration. In the full resolvosome a probable DNA-RuvA(4)-RuvB(12)-RuvC(2) complex forms which resolves the HJ.

It is found in the cytoplasm. Its function is as follows. The RuvA-RuvB-RuvC complex processes Holliday junction (HJ) DNA during genetic recombination and DNA repair, while the RuvA-RuvB complex plays an important role in the rescue of blocked DNA replication forks via replication fork reversal (RFR). RuvA specifically binds to HJ cruciform DNA, conferring on it an open structure. The RuvB hexamer acts as an ATP-dependent pump, pulling dsDNA into and through the RuvAB complex. HJ branch migration allows RuvC to scan DNA until it finds its consensus sequence, where it cleaves and resolves the cruciform DNA. This is Holliday junction branch migration complex subunit RuvA from Clavibacter sepedonicus (Clavibacter michiganensis subsp. sepedonicus).